The sequence spans 388 residues: S-adenosylmethionine synthase (388 aa).

Residue His-16 coordinates ATP. Asp-18 contributes to the Mg(2+) binding site. Glu-44 serves as a coordination point for K(+). Residues Glu-57 and Gln-100 each contribute to the L-methionine site. The segment at 100-110 (QSADIAQGVNE) is flexible loop. Residues 167-169 (DAK), 233-234 (RF), Asp-242, 248-249 (RK), Ala-265, and Lys-269 each bind ATP. Asp-242 serves as a coordination point for L-methionine. Residue Lys-273 coordinates L-methionine.

Belongs to the AdoMet synthase family. Homotetramer; dimer of dimers. The cofactor is Mg(2+). K(+) serves as cofactor.

The protein localises to the cytoplasm. It carries out the reaction L-methionine + ATP + H2O = S-adenosyl-L-methionine + phosphate + diphosphate. It functions in the pathway amino-acid biosynthesis; S-adenosyl-L-methionine biosynthesis; S-adenosyl-L-methionine from L-methionine: step 1/1. Functionally, catalyzes the formation of S-adenosylmethionine (AdoMet) from methionine and ATP. The overall synthetic reaction is composed of two sequential steps, AdoMet formation and the subsequent tripolyphosphate hydrolysis which occurs prior to release of AdoMet from the enzyme. In Aromatoleum aromaticum (strain DSM 19018 / LMG 30748 / EbN1) (Azoarcus sp. (strain EbN1)), this protein is S-adenosylmethionine synthase.